The sequence spans 145 residues: D-aminoacyl-tRNA deacylase (145 aa).

The Gly-cisPro motif, important for rejection of L-amino acids signature appears at 137 to 138 (GP).

Belongs to the DTD family. In terms of assembly, homodimer.

The protein localises to the cytoplasm. It catalyses the reaction glycyl-tRNA(Ala) + H2O = tRNA(Ala) + glycine + H(+). It carries out the reaction a D-aminoacyl-tRNA + H2O = a tRNA + a D-alpha-amino acid + H(+). In terms of biological role, an aminoacyl-tRNA editing enzyme that deacylates mischarged D-aminoacyl-tRNAs. Also deacylates mischarged glycyl-tRNA(Ala), protecting cells against glycine mischarging by AlaRS. Acts via tRNA-based rather than protein-based catalysis; rejects L-amino acids rather than detecting D-amino acids in the active site. By recycling D-aminoacyl-tRNA to D-amino acids and free tRNA molecules, this enzyme counteracts the toxicity associated with the formation of D-aminoacyl-tRNA entities in vivo and helps enforce protein L-homochirality. This Carboxydothermus hydrogenoformans (strain ATCC BAA-161 / DSM 6008 / Z-2901) protein is D-aminoacyl-tRNA deacylase.